The sequence spans 473 residues: MATQICTPTFSAGSAKGLCGTSGSFSRISSIHSMGSCRAPSLVGTVGSVSSFRTGFSGPGSCLPGSYLSSGCHSSGFAGSGGWFCEGAFNGNEKATMQILNDRLANYLEKVRQLEQENTQLECRIREWYECQIPYICPDYQSYFKTAEELQQKILLTKSENARLILQIDNAKLAADDFRTKYETELSLRQLVEADINGLRRILDELTLCKADLEAQVESLKEELLCLKRNHEEEVNALRSQLGDRLNVEVDAAPPVDLNKILDDMRCQYETLVENNRRDVEAWFNTQTEELNQQVVSSSEQLQCCQTEIIELRRTVNSLEIELQAQQSMRNSLESTLAETEARYSSQLGQMQCLITNVESQLAEIRCDLERQNHEYQVLLDVKARLESEIATYRRLLDGEDCKLPAHPCSTECKPAVRVPYIPSTTCTPAGPCTPAGPCTPAPQVSTQIRTITEEIRDGRVISSREHVVPRAM.

The tract at residues 1–93 is head; the sequence is MATQICTPTF…FCEGAFNGNE (93 aa). In terms of domain architecture, IF rod spans 93-404; the sequence is EKATMQILND…RLLDGEDCKL (312 aa). A coil 1A region spans residues 94–128; that stretch reads KATMQILNDRLANYLEKVRQLEQENTQLECRIREW. The interval 129 to 139 is linker 1; that stretch reads YECQIPYICPD. The tract at residues 140–240 is coil 1B; it reads YQSYFKTAEE…HEEEVNALRS (101 aa). Positions 241–256 are linker 12; the sequence is QLGDRLNVEVDAAPPV. A coil 2 region spans residues 257-400; that stretch reads DLNKILDDMR…ATYRRLLDGE (144 aa). Residues 401–473 form a tail region; sequence DCKLPAHPCS…SREHVVPRAM (73 aa).

Belongs to the intermediate filament family. In terms of assembly, heterotetramer of two type I and two type II keratins. In terms of tissue distribution, in skin, only expressed in the suprabasal cells of tail scale epidermis. Suprabasally expressed in stratified squamous epithelia and also in the posterior unit of the complex filiform papillae of tongue. Expressed in rare anatomical sites in which an orthokeratinized stratum corneum would be too soft and a hard keratinized structure would be too rigid to meet the functional requirement of the respective epithelia.

This chain is Keratin, type I cuticular Ha6, found in Mus musculus (Mouse).